A 503-amino-acid polypeptide reads, in one-letter code: Ribose import ATP-binding protein RbsA (503 aa).

ABC transporter domains lie at 10-246 and 256-500; these read LEVR…VGRD and VEPG…TGSE. 42 to 49 lines the ATP pocket; the sequence is GENGAGKS.

Belongs to the ABC transporter superfamily. Ribose importer (TC 3.A.1.2.1) family. In terms of assembly, the complex is composed of an ATP-binding protein (RbsA), two transmembrane proteins (RbsC) and a solute-binding protein (RbsB).

Its subcellular location is the cell membrane. The catalysed reaction is D-ribose(out) + ATP + H2O = D-ribose(in) + ADP + phosphate + H(+). In terms of biological role, part of the ABC transporter complex RbsABC involved in ribose import. Responsible for energy coupling to the transport system. This Rhodococcus jostii (strain RHA1) protein is Ribose import ATP-binding protein RbsA.